The sequence spans 295 residues: UDP-N-acetylenolpyruvoylglucosamine reductase (295 aa).

Positions 23–188 (KVGGPADFLA…ISAKFALKPG (166 aa)) constitute an FAD-binding PCMH-type domain. The active site involves arginine 167. Serine 217 acts as the Proton donor in catalysis. Glutamate 287 is an active-site residue.

The protein belongs to the MurB family. FAD serves as cofactor.

The protein resides in the cytoplasm. The enzyme catalyses UDP-N-acetyl-alpha-D-muramate + NADP(+) = UDP-N-acetyl-3-O-(1-carboxyvinyl)-alpha-D-glucosamine + NADPH + H(+). The protein operates within cell wall biogenesis; peptidoglycan biosynthesis. Its function is as follows. Cell wall formation. The polypeptide is UDP-N-acetylenolpyruvoylglucosamine reductase (Streptococcus pyogenes serotype M28 (strain MGAS6180)).